Here is a 270-residue protein sequence, read N- to C-terminus: Phospholysine phosphohistidine inorganic pyrophosphate phosphatase (270 aa).

Positions 17 and 19 each coordinate Mg(2+). Substrate-binding positions include Asp17–Ser19, Thr54–Asn55, and Lys189. Asp214 provides a ligand contact to Mg(2+).

This sequence belongs to the HAD-like hydrolase superfamily. Homodimer. Mg(2+) serves as cofactor.

The protein resides in the cytoplasm. Its subcellular location is the nucleus. The enzyme catalyses diphosphate + H2O = 2 phosphate + H(+). Its function is as follows. Phosphatase that hydrolyzes imidodiphosphate, 3-phosphohistidine and 6-phospholysine. Has broad substrate specificity and can also hydrolyze inorganic diphosphate, but with lower efficiency. This is Phospholysine phosphohistidine inorganic pyrophosphate phosphatase (Lhpp) from Mus musculus (Mouse).